We begin with the raw amino-acid sequence, 427 residues long: Acyl-CoA hydrolase 2 (427 aa).

15 to 83 (LLQKLPSSSL…FLLKQYDYFG (69 aa)) serves as a coordination point for a nucleoside 3',5'-cyclic phosphate. Residues Asp337, Ser359, and Gln409 each act as charge relay system in the active site. The Microbody targeting signal motif lies at 425 to 427 (SKL).

The protein belongs to the C/M/P thioester hydrolase family. In terms of assembly, homotetramer. In terms of tissue distribution, mostly expressed in leaves and flowers, and, to a lower extent, in seedlings and siliques.

The protein resides in the peroxisome matrix. It catalyses the reaction a fatty acyl-CoA + H2O = a fatty acid + CoA + H(+). The catalysed reaction is dodecanoyl-CoA + H2O = dodecanoate + CoA + H(+). The enzyme catalyses tetradecanoyl-CoA + H2O = tetradecanoate + CoA + H(+). It carries out the reaction octadecanoyl-CoA + H2O = octadecanoate + CoA + H(+). It catalyses the reaction (9Z)-hexadecenoyl-CoA + H2O = (9Z)-hexadecenoate + CoA + H(+). The catalysed reaction is (5Z,8Z,11Z,14Z)-eicosatetraenoyl-CoA + H2O = (5Z,8Z,11Z,14Z)-eicosatetraenoate + CoA + H(+). The enzyme catalyses hexadecanoyl-CoA + H2O = hexadecanoate + CoA + H(+). It carries out the reaction (9Z)-octadecenoyl-CoA + H2O = (9Z)-octadecenoate + CoA + H(+). It catalyses the reaction (9Z,12Z)-octadecadienoyl-CoA + H2O = (9Z,12Z)-octadecadienoate + CoA + H(+). The protein operates within lipid metabolism; fatty acid metabolism. Its activity is regulated as follows. Insensitive to feedback inhibition by free coenzyme A (CoASH). Catalyzes the hydrolysis of acyl-CoAs into free fatty acids and coenzyme A (CoASH), regulating their respective intracellular levels. Active with both medium chain and long chain acyl-CoAs (e.g. 12:0-CoA, 14:0-CoA, 16:0-CoA, 18:0-CoA, 16:1-CoA, 18:1-CoA, 18:2-CoA and 20:4-CoA) as substrates, palmitoleoyl-CoA (16:1-CoA) being the favorite substrate. The protein is Acyl-CoA hydrolase 2 of Arabidopsis thaliana (Mouse-ear cress).